A 365-amino-acid polypeptide reads, in one-letter code: Galactoside alpha-(1,2)-fucosyltransferase 1 (365 aa).

The Cytoplasmic portion of the chain corresponds to 1-8; that stretch reads MWPLSHRH. Residues 9-25 traverse the membrane as a helical; Signal-anchor for type II membrane protein segment; it reads LCLAFLLVCVLSAISFF. The Lumenal segment spans residues 26–365; it reads LHIYQDSIRH…LSSLWTLAEP (340 aa). N-linked (GlcNAc...) asparagine glycosylation is found at asparagine 65, asparagine 301, and asparagine 327.

Belongs to the glycosyltransferase 11 family.

The protein resides in the golgi apparatus. The protein localises to the golgi stack membrane. It carries out the reaction a beta-D-galactosyl-(1-&gt;4)-N-acetyl-beta-D-glucosaminyl derivative + GDP-beta-L-fucose = an alpha-L-Fuc-(1-&gt;2)-beta-D-Gal-(1-&gt;4)-beta-D-GlcNAc derivative + GDP + H(+). The catalysed reaction is a ganglioside GA1 + GDP-beta-L-fucose = a ganglioside Fuc-GA1 + GDP + H(+). The enzyme catalyses a beta-D-Gal-(1-&gt;3)-beta-D-GlcNAc-(1-&gt;3)-beta-D-Gal-(1-&gt;4)-beta-D-Glc-(1&lt;-&gt;1')-Cer(d18:1(4E)) + GDP-beta-L-fucose = alpha-L-fucosyl-(1-&gt;2)- beta-D-galactosyl-(1-&gt;3)-N-acetyl-beta-D-glucosaminyl-(1-&gt;3)-beta-D-galactosyl-(1-&gt;4)-beta-D-glucosyl-(1&lt;-&gt;1')-N-acylsphing-4-enine + GDP + H(+). It catalyses the reaction a neolactoside nLc4Cer(d18:1(4E)) + GDP-beta-L-fucose = a neolactoside IV(2)-alpha-Fuc-nLc4Cer(d18:1(4E)) + GDP + H(+). It carries out the reaction a ganglioside GM1 + GDP-beta-L-fucose = a ganglioside Fuc-GM1 + GDP + H(+). The catalysed reaction is beta-D-galactosyl-(1-&gt;3)-N-acetyl-D-galactosamine + GDP-beta-L-fucose = alpha-L-fucosyl-(1-&gt;2)-beta-D-galactosyl-(1-&gt;3)-N-acetyl-D-galactosamine + GDP + H(+). Its pathway is protein modification; protein glycosylation. Its function is as follows. Catalyzes the transfer of L-fucose, from a guanosine diphosphate-beta-L-fucose, to the terminal galactose residue of glycoconjugates through an alpha(1,2) linkage leading to H antigen synthesis that is an intermediate substrate in the synthesis of ABO blood group antigens. H antigen is essential for maturation of the glomerular layer of the main olfactory bulb, in cell migration and early cell-cell contacts during tumor associated angiogenesis. Preferentially fucosylates soluble lactose and to a lesser extent fucosylates glycolipids gangliosides GA1 and GM1a. The protein is Galactoside alpha-(1,2)-fucosyltransferase 1 of Leontocebus fuscicollis (Brown-mantled tamarin).